Consider the following 187-residue polypeptide: Photosystem I assembly protein Ycf4 (187 aa).

The next 2 membrane-spanning stretches (helical) occupy residues 25–45 and 69–89; these read YLWA…GISS and MSFY…TVIW.

It belongs to the Ycf4 family.

Its subcellular location is the cellular thylakoid membrane. In terms of biological role, seems to be required for the assembly of the photosystem I complex. This is Photosystem I assembly protein Ycf4 from Trichodesmium erythraeum (strain IMS101).